Reading from the N-terminus, the 355-residue chain is Putative inositol monophosphatase 3 (355 aa).

A helical membrane pass occupies residues 16–36 (LPATIVAILLTFVLVYFLNFH). Positions 127, 167, 169, 170, and 292 each coordinate Mg(2+). A substrate-binding site is contributed by glutamate 127. Substrate-binding positions include 169 to 172 (LDAT) and aspartate 292.

The protein belongs to the inositol monophosphatase superfamily. It depends on Mg(2+) as a cofactor.

It is found in the membrane. It catalyses the reaction a myo-inositol phosphate + H2O = myo-inositol + phosphate. It functions in the pathway polyol metabolism; myo-inositol biosynthesis; myo-inositol from D-glucose 6-phosphate: step 2/2. This is Putative inositol monophosphatase 3 from Drosophila melanogaster (Fruit fly).